Here is an 87-residue protein sequence, read N- to C-terminus: Large ribosomal subunit protein bL31B (87 aa).

This sequence belongs to the bacterial ribosomal protein bL31 family. Type B subfamily. As to quaternary structure, part of the 50S ribosomal subunit.

The protein is Large ribosomal subunit protein bL31B of Halorhodospira halophila (strain DSM 244 / SL1) (Ectothiorhodospira halophila (strain DSM 244 / SL1)).